Reading from the N-terminus, the 106-residue chain is Small ribosomal subunit protein uS10 (106 aa).

It belongs to the universal ribosomal protein uS10 family. As to quaternary structure, part of the 30S ribosomal subunit.

In terms of biological role, involved in the binding of tRNA to the ribosomes. The polypeptide is Small ribosomal subunit protein uS10 (Pyrobaculum islandicum (strain DSM 4184 / JCM 9189 / GEO3)).